The chain runs to 286 residues: Cbb3-type cytochrome c oxidase subunit CcoP (286 aa).

A run of 2 helical transmembrane segments spans residues F11–I31 and V62–G82. 2 consecutive Cytochrome c domains span residues E116–L195 and Q205–R286. Residues C129, C132, H133, M174, C219, C222, H223, and M264 each contribute to the heme c site.

Belongs to the CcoP / FixP family. Component of the cbb3-type cytochrome c oxidase at least composed of CcoN, CcoO, CcoQ and CcoP. The cofactor is heme c.

The protein localises to the cell inner membrane. It functions in the pathway energy metabolism; oxidative phosphorylation. Functionally, C-type cytochrome. Part of the cbb3-type cytochrome c oxidase complex. CcoP subunit is required for transferring electrons from donor cytochrome c via its heme groups to CcoO subunit. From there, electrons are shuttled to the catalytic binuclear center of CcoN subunit where oxygen reduction takes place. The complex also functions as a proton pump. The protein is Cbb3-type cytochrome c oxidase subunit CcoP of Helicobacter pylori (strain ATCC 700392 / 26695) (Campylobacter pylori).